Consider the following 64-residue polypeptide: U-scoloptoxin(14)-Er1a (64 aa).

Positions 1 to 23 are cleaved as a signal peptide; that stretch reads MRPSFPLLLIMLLVCTAHHMVSG.

It belongs to the scoloptoxin-14 family. Post-translationally, contains 4 disulfide bonds. In terms of tissue distribution, expressed by the venom gland.

It localises to the secreted. The sequence is that of U-scoloptoxin(14)-Er1a from Ethmostigmus rubripes (Giant centipede).